We begin with the raw amino-acid sequence, 215 residues long: MYGINQRYLYISFHFFVVWCHAQGEKNHPSPNFKQYVREQGSLTDQLSRRQVRVYQLYSRTSGKHVQIRGHRVSATADDGNSYARLYVETDTFGSRVRIKGAESGRYLCMNRRGKLVGKPNGRGRDCIFTEIVLENNYTALENARHEGWFVAFTRKGRPIRASKTRQNQREVHFIKRLHKGPQPFPNAEQPKHFEFISFPSTRRAKRNRKHQTAS.

An N-terminal signal peptide occupies residues 1–22; the sequence is MYGINQRYLYISFHFFVVWCHA. N-linked (GlcNAc...) asparagine glycosylation is present at Asn137.

Belongs to the heparin-binding growth factors family.

Its subcellular location is the secreted. Involved in dorsal-ventral embryonic patterning, by promoting expression of bone morphogenetic protein (BMP) antagonists such as chd. Also involved in anterior-posterior neural patterning and in mesoderm induction. This is Fibroblast growth factor 17 (fgf17) from Danio rerio (Zebrafish).